Here is a 388-residue protein sequence, read N- to C-terminus: Chorismate synthase (388 aa).

Positions 39 and 45 each coordinate NADP(+). FMN contacts are provided by residues 132 to 134 (RSS), 251 to 252 (NA), glycine 296, 311 to 315 (KPIPT), and arginine 337.

This sequence belongs to the chorismate synthase family. In terms of assembly, homotetramer. FMNH2 serves as cofactor.

It carries out the reaction 5-O-(1-carboxyvinyl)-3-phosphoshikimate = chorismate + phosphate. Its pathway is metabolic intermediate biosynthesis; chorismate biosynthesis; chorismate from D-erythrose 4-phosphate and phosphoenolpyruvate: step 7/7. Its function is as follows. Catalyzes the anti-1,4-elimination of the C-3 phosphate and the C-6 proR hydrogen from 5-enolpyruvylshikimate-3-phosphate (EPSP) to yield chorismate, which is the branch point compound that serves as the starting substrate for the three terminal pathways of aromatic amino acid biosynthesis. This reaction introduces a second double bond into the aromatic ring system. The chain is Chorismate synthase from Staphylococcus aureus (strain COL).